A 115-amino-acid polypeptide reads, in one-letter code: NADH-ubiquinone oxidoreductase chain 3 (115 aa).

3 helical membrane passes run 4–24 (LLAMLINITLSLLLISIAFWL), 55–75 (FFLVAITFLLFDLEIALLLPI), and 87–107 (MMLTAFILVTILALGLAYEWI).

Belongs to the complex I subunit 3 family. Core subunit of respiratory chain NADH dehydrogenase (Complex I) which is composed of 45 different subunits. Interacts with TMEM186. Interacts with TMEM242.

The protein localises to the mitochondrion inner membrane. The catalysed reaction is a ubiquinone + NADH + 5 H(+)(in) = a ubiquinol + NAD(+) + 4 H(+)(out). Functionally, core subunit of the mitochondrial membrane respiratory chain NADH dehydrogenase (Complex I) which catalyzes electron transfer from NADH through the respiratory chain, using ubiquinone as an electron acceptor. Essential for the catalytic activity of complex I. This is NADH-ubiquinone oxidoreductase chain 3 from Neotoma floridana (Eastern woodrat).